The sequence spans 273 residues: Undecaprenyl-diphosphatase (273 aa).

7 helical membrane passes run 6–26 (SLLI…LPVS), 45–65 (AKTF…VMFW), 90–110 (LTLI…LVFH), 116–136 (LFNP…LIAA), 190–210 (YAAS…ATVL), 222–242 (ADIP…LIAI), and 252–272 (ISFI…YVVF).

The protein belongs to the UppP family.

The protein resides in the cell inner membrane. The enzyme catalyses di-trans,octa-cis-undecaprenyl diphosphate + H2O = di-trans,octa-cis-undecaprenyl phosphate + phosphate + H(+). Functionally, catalyzes the dephosphorylation of undecaprenyl diphosphate (UPP). Confers resistance to bacitracin. The chain is Undecaprenyl-diphosphatase from Salmonella paratyphi C (strain RKS4594).